The chain runs to 196 residues: Cytochrome c biogenesis ATP-binding export protein CcmA (196 aa).

The ABC transporter domain maps to 2-195 (LSFHQLKFNI…HIKSAQILQL (194 aa)). 34 to 41 (GANGCGKT) contacts ATP.

This sequence belongs to the ABC transporter superfamily. CcmA exporter (TC 3.A.1.107) family. As to quaternary structure, the complex is composed of two ATP-binding proteins (CcmA) and two transmembrane proteins (CcmB).

The protein resides in the cell inner membrane. It carries out the reaction heme b(in) + ATP + H2O = heme b(out) + ADP + phosphate + H(+). Functionally, part of the ABC transporter complex CcmAB involved in the biogenesis of c-type cytochromes; once thought to export heme, this seems not to be the case, but its exact role is uncertain. Responsible for energy coupling to the transport system. This is Cytochrome c biogenesis ATP-binding export protein CcmA from Rickettsia bellii (strain RML369-C).